A 111-amino-acid chain; its full sequence is Ig kappa chain V-III region PC 7175 (111 aa).

Residues Asp1 to Cys23 are framework-1. Cys23 and Cys92 are disulfide-bonded. A complementarity-determining-1 region spans residues Arg24 to His38. The interval Trp39 to Tyr53 is framework-2. Residues Leu54–Ser60 form a complementarity-determining-2 region. Residues Gly61–Cys92 form a framework-3 region. The tract at residues Gln93–Thr101 is complementarity-determining-3. Residues Phe102–Lys111 form a framework-4 region.

This is Ig kappa chain V-III region PC 7175 from Mus musculus (Mouse).